The following is a 155-amino-acid chain: Calmodulin, flagellar (155 aa).

4 EF-hand domains span residues 14-49 (EQIA…LGQN), 50-85 (PTEA…KMKD), 87-122 (DNEE…LGEK), and 123-155 (LTDE…MMQK). 19 residues coordinate Ca(2+): D27, D29, D31, T33, E38, D63, D65, N67, T69, E74, D100, D102, N104, E111, D136, D138, D140, Q142, and E147.

This sequence belongs to the calmodulin family.

Its subcellular location is the cell projection. It localises to the cilium. The protein resides in the flagellum. In terms of biological role, calmodulin mediates the control of a large number of enzymes, ion channels and other proteins by Ca(2+). Among the enzymes to be stimulated by the calmodulin-Ca(2+) complex are a number of protein kinases and phosphatases. The protein is Calmodulin, flagellar (CAM1) of Naegleria gruberi (Amoeba).